A 337-amino-acid polypeptide reads, in one-letter code: tRNA N6-adenosine threonylcarbamoyltransferase (337 aa).

Fe cation contacts are provided by H111 and H115. Residues L134–G138, D167, G180, and N272 each bind substrate. D300 is a binding site for Fe cation.

The protein belongs to the KAE1 / TsaD family. Fe(2+) serves as cofactor.

It localises to the cytoplasm. It carries out the reaction L-threonylcarbamoyladenylate + adenosine(37) in tRNA = N(6)-L-threonylcarbamoyladenosine(37) in tRNA + AMP + H(+). In terms of biological role, required for the formation of a threonylcarbamoyl group on adenosine at position 37 (t(6)A37) in tRNAs that read codons beginning with adenine. Is involved in the transfer of the threonylcarbamoyl moiety of threonylcarbamoyl-AMP (TC-AMP) to the N6 group of A37, together with TsaE and TsaB. TsaD likely plays a direct catalytic role in this reaction. The sequence is that of tRNA N6-adenosine threonylcarbamoyltransferase from Pseudoalteromonas translucida (strain TAC 125).